A 568-amino-acid chain; its full sequence is Proline--tRNA ligase (568 aa).

It belongs to the class-II aminoacyl-tRNA synthetase family. ProS type 1 subfamily. As to quaternary structure, homodimer.

It localises to the cytoplasm. It catalyses the reaction tRNA(Pro) + L-proline + ATP = L-prolyl-tRNA(Pro) + AMP + diphosphate. Its function is as follows. Catalyzes the attachment of proline to tRNA(Pro) in a two-step reaction: proline is first activated by ATP to form Pro-AMP and then transferred to the acceptor end of tRNA(Pro). As ProRS can inadvertently accommodate and process non-cognate amino acids such as alanine and cysteine, to avoid such errors it has two additional distinct editing activities against alanine. One activity is designated as 'pretransfer' editing and involves the tRNA(Pro)-independent hydrolysis of activated Ala-AMP. The other activity is designated 'posttransfer' editing and involves deacylation of mischarged Ala-tRNA(Pro). The misacylated Cys-tRNA(Pro) is not edited by ProRS. This Aliarcobacter butzleri (strain RM4018) (Arcobacter butzleri) protein is Proline--tRNA ligase.